A 239-amino-acid chain; its full sequence is Tungstate uptake system permease protein TupB (239 aa).

An ABC transmembrane type-1 domain is found at 37–233 (IKTTLLSSSI…LIAFCLNFIT (197 aa)). The next 5 membrane-spanning stretches (helical) occupy residues 45-65 (SISIVLALLIGFPLGFILGFF), 76-96 (IVDTSLSFPTVAVGLILYALI), 114-134 (LILGQFILALPIVIALFSNLI), 168-188 (ISVVALAYGRIVAEVGVAMIV), and 212-232 (FASGIALALVLILIAFCLNFI).

It belongs to the binding-protein-dependent transport system permease family. As to quaternary structure, the complex is composed of two ATP-binding proteins (TupC), two transmembrane proteins (TupB) and a solute-binding protein (TupA).

It localises to the cell inner membrane. Part of an ABC transporter complex involved in ultra-high affinity tungstate uptake. Probably responsible for the translocation of the substrate across the membrane. The protein is Tungstate uptake system permease protein TupB of Campylobacter jejuni subsp. jejuni serotype O:2 (strain ATCC 700819 / NCTC 11168).